Reading from the N-terminus, the 227-residue chain is MQLCVALDLPTKEENLELIGKIKDYDVWLKVGLRSYIRDGEDFLKDIKKINPDFKIFLDLKLYDIPNTMADAAESIISLGVDMFNVHASAGKRAMREVMVRLERYEKRPIVLAVTALTSFNEDEFGKIYGDSISKKADQFAKDAYESGLDGVVCSAYESSSIKNITNRDFMTLTPGIRPFGEDSGDQQRVADVAFAKNAHVDFIVVGRPIYNSKNPAEVIRRILEQI.

Substrate contacts are provided by residues D8, K30, 59-68, T118, R178, Q187, G207, and R208; that span reads DLKLYDIPNT. Residue K61 is the Proton donor of the active site.

This sequence belongs to the OMP decarboxylase family. Type 1 subfamily. In terms of assembly, homodimer.

It catalyses the reaction orotidine 5'-phosphate + H(+) = UMP + CO2. The protein operates within pyrimidine metabolism; UMP biosynthesis via de novo pathway; UMP from orotate: step 2/2. Catalyzes the decarboxylation of orotidine 5'-monophosphate (OMP) to uridine 5'-monophosphate (UMP). The sequence is that of Orotidine 5'-phosphate decarboxylase from Sulfurimonas denitrificans (strain ATCC 33889 / DSM 1251) (Thiomicrospira denitrificans (strain ATCC 33889 / DSM 1251)).